A 428-amino-acid chain; its full sequence is Serine--tRNA ligase (428 aa).

Residue 231–233 (TAE) coordinates L-serine. 262–264 (RAE) contributes to the ATP binding site. Position 285 (Glu285) interacts with L-serine. 349–352 (EISS) lines the ATP pocket. Ser385 is an L-serine binding site.

It belongs to the class-II aminoacyl-tRNA synthetase family. Type-1 seryl-tRNA synthetase subfamily. Homodimer. The tRNA molecule binds across the dimer.

The protein localises to the cytoplasm. The catalysed reaction is tRNA(Ser) + L-serine + ATP = L-seryl-tRNA(Ser) + AMP + diphosphate + H(+). It catalyses the reaction tRNA(Sec) + L-serine + ATP = L-seryl-tRNA(Sec) + AMP + diphosphate + H(+). The protein operates within aminoacyl-tRNA biosynthesis; selenocysteinyl-tRNA(Sec) biosynthesis; L-seryl-tRNA(Sec) from L-serine and tRNA(Sec): step 1/1. Its function is as follows. Catalyzes the attachment of serine to tRNA(Ser). Is also able to aminoacylate tRNA(Sec) with serine, to form the misacylated tRNA L-seryl-tRNA(Sec), which will be further converted into selenocysteinyl-tRNA(Sec). The sequence is that of Serine--tRNA ligase from Methylorubrum populi (strain ATCC BAA-705 / NCIMB 13946 / BJ001) (Methylobacterium populi).